Here is a 479-residue protein sequence, read N- to C-terminus: Ribosomal RNA small subunit methyltransferase F (479 aa).

S-adenosyl-L-methionine-binding positions include 125 to 131 (AAAPGSK), E149, D176, and D194. The active-site Nucleophile is the C247.

It belongs to the class I-like SAM-binding methyltransferase superfamily. RsmB/NOP family.

It localises to the cytoplasm. It carries out the reaction cytidine(1407) in 16S rRNA + S-adenosyl-L-methionine = 5-methylcytidine(1407) in 16S rRNA + S-adenosyl-L-homocysteine + H(+). Its function is as follows. Specifically methylates the cytosine at position 1407 (m5C1407) of 16S rRNA. The protein is Ribosomal RNA small subunit methyltransferase F of Escherichia coli O7:K1 (strain IAI39 / ExPEC).